Consider the following 539-residue polypeptide: Chaperonin GroEL (539 aa).

ATP contacts are provided by residues 29 to 32, 86 to 90, glycine 413, 477 to 479, and aspartate 493; these read TLGP, DGTTT, and NAA.

It belongs to the chaperonin (HSP60) family. As to quaternary structure, forms a cylinder of 14 subunits composed of two heptameric rings stacked back-to-back. Interacts with the co-chaperonin GroES.

It localises to the cytoplasm. It carries out the reaction ATP + H2O + a folded polypeptide = ADP + phosphate + an unfolded polypeptide.. Together with its co-chaperonin GroES, plays an essential role in assisting protein folding. The GroEL-GroES system forms a nano-cage that allows encapsulation of the non-native substrate proteins and provides a physical environment optimized to promote and accelerate protein folding. This Clavibacter michiganensis subsp. michiganensis (strain NCPPB 382) protein is Chaperonin GroEL.